Reading from the N-terminus, the 202-residue chain is ATP-dependent Clp protease proteolytic subunit (202 aa).

Serine 106 (nucleophile) is an active-site residue. The active site involves histidine 131.

Belongs to the peptidase S14 family. As to quaternary structure, fourteen ClpP subunits assemble into 2 heptameric rings which stack back to back to give a disk-like structure with a central cavity, resembling the structure of eukaryotic proteasomes.

Its subcellular location is the cytoplasm. The enzyme catalyses Hydrolysis of proteins to small peptides in the presence of ATP and magnesium. alpha-casein is the usual test substrate. In the absence of ATP, only oligopeptides shorter than five residues are hydrolyzed (such as succinyl-Leu-Tyr-|-NHMec, and Leu-Tyr-Leu-|-Tyr-Trp, in which cleavage of the -Tyr-|-Leu- and -Tyr-|-Trp bonds also occurs).. Functionally, cleaves peptides in various proteins in a process that requires ATP hydrolysis. Has a chymotrypsin-like activity. Plays a major role in the degradation of misfolded proteins. The sequence is that of ATP-dependent Clp protease proteolytic subunit from Variovorax paradoxus (strain S110).